A 1403-amino-acid polypeptide reads, in one-letter code: MAEHGESSEDRISEIDYEFLPELSALLGVDAFQVAKSQEEEEHKERMKMKKGFNSQMRSEAKRLKTFETYDTFRSWTPQEMAAAGFYHTGVRLGVQCFCCSLILFGNSLRKLPIERHKKLRPECEFLQGKDVGNIGKYDIRVKRPEKMLRGGKARYHEEEARLESFEDWPFYAHGTSPRVLSAAGFVFTGKRDTVQCFSCGGSLGNWEEGDDPWKEHAKWFPKCEFLQSKKSSEEIAQYIQSYEGFVHVTGEHFVKSWVRRELPMVSAYCNDSVFANEELRMDMFKDWPQESPVGVEALVRAGFFYTGKKDIVRCFSCGGCLEKWAEGDDPMEDHIKFFPECVFLQTLKSSAEVIPTLQSQYALPEATETTRESNHGDAAAVHSTVVDLGRSEAQWFQEARSLSEQLRDNYTKATFRHMNLPEVCSSLGTDHLLSCDVSIISKHISQPVQEALTIPEVFSNLNSVMCVEGETGSGKTTFLKRIAFLWASGCCPLLYRFQLVFYLSLSSITPDQGLANIICAQLLGAGGCISEVCLSSSIQQLQHQVLFLLDDYSGLASLPQALHTLITKNYLSRTCLLIAVHTNRVRDIRLYLGTSLEIQEFPFYNTVSVLRKFFSHDIICVEKLIIYFIDNKDLQGVYKTPLFVAAVCTDWIQNASAQDKFQDVTLFQSYMQYLSLKYKATAEPLQATVSSCGQLALTGLFSSCFEFNSDDLAEAGVDEDEKLTTLLMSKFTAQRLRPVYRFLGPLFQEFLAAVRLTELLSSDRQEDQDLGLYYLRQIDSPLKAINSFNIFLYYVSSHSSSKAAPTVVSHLLQLVDEKESLENMSENEDYMKLHPQTFLWFQFVRGLWLVSPESSSSFVSEHLLRLALIFAYESNTVAECSPFILQFLRGKTLALRVLNLQYFRDHPESLLLLRSLKVSINGNKMSSYVDYSFKTYFENLQPPAIDEEYTSAFEHISEWRRNFAQDEEIIKNYENIRPRALPDISEGYWKLSPKPCKIPKLEVQVNNTDAADQALLQVLMEVFSASQSIEFRLFNSSGFLESICPALELSKASVTKCSMSRLELSRAEQELLLTLPALQSLEVSETNQLPEQLFHNLHKFLGLKELCVRLDGKPNVLSVLPREFPNLLHMEKLSIQTSTESDLSKLVKFIQNFPNLHVFHLKCDFLSNCESLMAVLASCKKLREIEFSGRCFEAMTFVNILPNFVSLKILNLKDQQFPDKETSEKFAQALGSLRNLEELLVPTGDGIHQVAKLIVRQCLQLPCLRVLTFHDILDDDSVIEIARAATSGGFQKLENLDISMNHKITEEGYRNFFQALDNLPNLQELNICRNIPGRIQVQATTVKALGQCVSRLPSLIRLHMLSWLLDEEDMKVINDVKERHPQSKRLIIFWKLIVPFSPVILE.

3 BIR repeats span residues 60–127, 159–227, and 278–345; these read EAKR…CEFL, EEAR…CEFL, and EELR…CVFL. 4 residues coordinate Zn(2+): Cys-315, Cys-318, His-335, and Cys-342. The region spanning 464 to 759 is the NACHT domain; the sequence is SVMCVEGETG…EFLAAVRLTE (296 aa). An ATP-binding site is contributed by 473-478; that stretch reads GSGKTT.

As to quaternary structure, component of the NLRC4 inflammasome, at least composed of NLRC4, caspase-1 (CASP1) and some NAIP protein. Flagellin binding by NAIP5 triggers assembly of the inflammasome, a huge complex that contains a single NAIP5 chain and multiple copies of NLRC4. In terms of assembly, (Microbial infection) Interacts with S.typhimurium (Salmonella) flagellin. (Microbial infection) Interacts with L.pneumophila flagellin. In terms of tissue distribution, detected in macrophages (at protein level).

Functionally, sensor component of the NLRC4 inflammasome that specifically recognizes and binds flagellin from pathogenic bacteria such as Legionella or Salmonella. Association of pathogenic bacteria proteins drives in turn drive assembly and activation of the NLRC4 inflammasome, promoting caspase-1 activation, cytokine production and macrophage pyroptosis. The NLRC4 inflammasome is activated as part of the innate immune response to a range of intracellular bacteria. The NLRC4 inflammasome senses Gram-negative bacteria such as L.pneumophila and P.aeruginosa, enteric pathogens S.typhimurium (Salmonella) and S.flexneri. May contribute to prevent motor-neuron apoptosis induced by a variety of signals. This chain is Baculoviral IAP repeat-containing protein 1e, found in Mus musculus (Mouse).